The sequence spans 387 residues: Succinyl-diaminopimelate desuccinylase (387 aa).

Position 74 (histidine 74) interacts with Zn(2+). Residue aspartate 76 is part of the active site. Aspartate 107 provides a ligand contact to Zn(2+). Residue glutamate 142 is the Proton acceptor of the active site. Zn(2+)-binding residues include glutamate 143, glutamate 171, and histidine 360.

It belongs to the peptidase M20A family. DapE subfamily. As to quaternary structure, homodimer. The cofactor is Zn(2+). It depends on Co(2+) as a cofactor.

The enzyme catalyses N-succinyl-(2S,6S)-2,6-diaminopimelate + H2O = (2S,6S)-2,6-diaminopimelate + succinate. It participates in amino-acid biosynthesis; L-lysine biosynthesis via DAP pathway; LL-2,6-diaminopimelate from (S)-tetrahydrodipicolinate (succinylase route): step 3/3. In terms of biological role, catalyzes the hydrolysis of N-succinyl-L,L-diaminopimelic acid (SDAP), forming succinate and LL-2,6-diaminopimelate (DAP), an intermediate involved in the bacterial biosynthesis of lysine and meso-diaminopimelic acid, an essential component of bacterial cell walls. The sequence is that of Succinyl-diaminopimelate desuccinylase from Rhodopseudomonas palustris (strain ATCC BAA-98 / CGA009).